Consider the following 237-residue polypeptide: DNA repair protein RecO (237 aa).

This sequence belongs to the RecO family.

Functionally, involved in DNA repair and RecF pathway recombination. In Actinobacillus succinogenes (strain ATCC 55618 / DSM 22257 / CCUG 43843 / 130Z), this protein is DNA repair protein RecO.